We begin with the raw amino-acid sequence, 694 residues long: Rabphilin-3A (694 aa).

Residues 1-12 are compositionally biased toward polar residues; sequence MTDTVFSNSSNR. Residues 1-51 are disordered; sequence MTDTVFSNSSNRWMYPSDRPLQSNDKEQLQAGWSVHPGGQPDRQRKQEELT. One can recognise a RabBD domain in the interval 44–160; that stretch reads QRKQEELTDE…KRSGAWFFKG (117 aa). Residues 92–148 form an FYVE-type zinc finger; that stretch reads GDGVNRCILCGEQLGMLGSACVVCEDCKKNVCTKCGVETNNRLHSVWLCKICIEQRE. Residues Cys-98, Cys-101, Cys-115, Cys-118, Cys-123, Cys-126, Cys-140, and Cys-143 each contribute to the Zn(2+) site. The tract at residues 166–388 is disordered; the sequence is LPQPMPIKKT…EEEANSYDSD (223 aa). The span at 177 to 186 shows a compositional bias: low complexity; the sequence is PQQPVSEPAA. Basic and acidic residues predominate over residues 202–211; it reads ARGDSEDRRG. An Omega-N-methylarginine modification is found at Arg-226. A Phosphoserine modification is found at Ser-272. Residues 352–370 are compositionally biased toward low complexity; that stretch reads PSGPYSQASAAAPQPAAAR. Positions 375-388 are enriched in acidic residues; sequence PEEEEEEANSYDSD. Residues 392–514 enclose the C2 1 domain; sequence TLGALEFSLL…KPNQRKNFNI (123 aa). The Ca(2+) site is built by Met-422, Asp-423, Asp-429, Asp-484, Glu-485, Asp-486, Glu-492, Glu-539, Asp-581, Asp-587, Asp-641, Tyr-642, Asp-643, and Asp-649. Residues 550–683 enclose the C2 2 domain; sequence ERGKILVSLM…NKDKKIERWH (134 aa). Phosphoserine occurs at positions 692 and 693.

Interacts with RAB3B, RAB3C, RAB3D, RAB8A, RAB27A and RAB27B. Interacts with RAB3A; this interaction recruits RPH3A to synaptic vesicules. Interacts (via C2B domain) with SNAP25. Interacts with deubiquitinating enzyme CAND1; this interaction results in the deubiquitination of RPH3A. Interacts with GRIN2A and DLG4; this ternary complex regulates NMDA receptor composition at postsynaptic membranes. Interacts with SNCA. Ca(2+) is required as a cofactor. Post-translationally, ubiquitinated. Deubiquitinated by CAND1 to prevent its degradation.

The protein resides in the cytoplasmic vesicle. It is found in the secretory vesicle. It localises to the synaptic vesicle membrane. Its subcellular location is the cell projection. The protein localises to the dendritic spine. The protein resides in the postsynaptic cell membrane. It is found in the membrane. Plays an essential role in docking and fusion steps of regulated exocytosis. At the presynaptic level, RPH3A is recruited by RAB3A to the synaptic vesicle membrane in a GTP-dependent manner where it modulates synaptic vesicle trafficking and calcium-triggered neurotransmitter release. In the post-synaptic compartment, forms a ternary complex with GRIN2A and DLG4 and regulates NMDA receptor stability. Also plays a role in the exocytosis of arginine vasopressin hormone. This is Rabphilin-3A (RPH3A) from Homo sapiens (Human).